The chain runs to 156 residues: Endoribonuclease YbeY (156 aa).

Residues histidine 111, histidine 115, and histidine 121 each coordinate Zn(2+).

It belongs to the endoribonuclease YbeY family. The cofactor is Zn(2+).

Its subcellular location is the cytoplasm. Single strand-specific metallo-endoribonuclease involved in late-stage 70S ribosome quality control and in maturation of the 3' terminus of the 16S rRNA. The sequence is that of Endoribonuclease YbeY from Hahella chejuensis (strain KCTC 2396).